A 310-amino-acid chain; its full sequence is Apolipoprotein E (310 aa).

The N-terminal stretch at 1–18 (MKVLWAALVVTLLAGCGA) is a signal peptide. 8 tandem repeats follow at residues 77 to 98 (ALMDDTMKEVKACQSELEEQLG), 99 to 120 (PVTEETKARVSKELQAAQARLG), 121 to 142 (ADMEEVRSRLAQYRGELQAMVG), 143 to 164 (QSTEELRGRLSAHLRKMRKRLL), 165 to 186 (RDAEDLQRRLAVYQAGIWEGAE), 187 to 208 (RSVNTLREHLGPLAEQAATVHT), 209 to 226 (LVSKPLQERAEAWAQRLR), and 227 to 248 (GRLEKAGFPVGDRLDEVREQVQ). Positions 77–248 (ALMDDTMKEV…RLDEVREQVQ (172 aa)) are 8 X 22 AA approximate tandem repeats. The segment at 155-165 (HLRKMRKRLLR) is LDL and other lipoprotein receptors binding. 159–162 (MRKR) provides a ligand contact to heparin. Positions 207–283 (HTLVSKPLQE…SWFEPLVQDM (77 aa)) are lipid-binding and lipoprotein association. 222–229 (AQRLRGRL) lines the heparin pocket. The segment at 259 to 310 (NQVRLQAEAFQGRLKSWFEPLVQDMQQKWAELVEKVQLAVGAVPTSVPSEKQ) is homooligomerization. Positions 271-283 (RLKSWFEPLVQDM) are specificity for association with VLDL.

The protein belongs to the apolipoprotein A1/A4/E family. Homotetramer. May interact with ABCA1; functionally associated with ABCA1 in the biogenesis of HDLs. May interact with APP/A4 amyloid-beta peptide; the interaction is extremely stable in vitro but its physiological significance is unclear. May interact with MAPT. May interact with MAP2. In the cerebrospinal fluid, interacts with secreted SORL1. Interacts with PMEL; this allows the loading of PMEL luminal fragment on ILVs to induce fibril nucleation. In terms of processing, APOE exists as multiple glycosylated and sialylated glycoforms within cells and in plasma. The extent of glycosylation and sialylation are tissue and context specific. Glycated in plasma VLDL. Post-translationally, phosphorylated by FAM20C in the extracellular medium.

The protein localises to the secreted. It localises to the extracellular space. It is found in the extracellular matrix. The protein resides in the extracellular vesicle. Its subcellular location is the endosome. The protein localises to the multivesicular body. Functionally, APOE is an apolipoprotein, a protein associating with lipid particles, that mainly functions in lipoprotein-mediated lipid transport between organs via the plasma and interstitial fluids. APOE is a core component of plasma lipoproteins and is involved in their production, conversion and clearance. Apolipoproteins are amphipathic molecules that interact both with lipids of the lipoprotein particle core and the aqueous environment of the plasma. As such, APOE associates with chylomicrons, chylomicron remnants, very low density lipoproteins (VLDL) and intermediate density lipoproteins (IDL) but shows a preferential binding to high-density lipoproteins (HDL). It also binds a wide range of cellular receptors including the LDL receptor/LDLR and the very low-density lipoprotein receptor/VLDLR that mediate the cellular uptake of the APOE-containing lipoprotein particles. Finally, APOE also has a heparin-binding activity and binds heparan-sulfate proteoglycans on the surface of cells, a property that supports the capture and the receptor-mediated uptake of APOE-containing lipoproteins by cells. The chain is Apolipoprotein E (APOE) from Ceratotherium simum cottoni (Northern white rhinoceros).